The sequence spans 446 residues: Methanogenesis regulatory protein FilR1 (446 aa).

A Response regulatory domain is found at 297–416 (DVMIVEDDLG…QRLPEIAEEA (120 aa)). D350 is modified (4-aspartylphosphate).

Phosphorylated by FilI.

In terms of biological role, member of the two-component regulatory system FilI/FilRs, which is involved in the regulation of methanogenesis. Regulates its own expression, expression of the filI-filR2 operon, and of genes involved in methanogenesis such as acs1, acs4 and mtrABC. Acts by binding to the promoters. The sequence is that of Methanogenesis regulatory protein FilR1 from Methanothrix harundinacea (strain 6Ac) (Methanosaeta harundinacea).